We begin with the raw amino-acid sequence, 132 residues long: Female-specific protein 800 (132 aa).

FS800 is likely to have some function in the production or maintenance of the schistosome egg. It may have a function unrelated to eggshell formation. This is Female-specific protein 800 from Schistosoma mansoni (Blood fluke).